A 506-amino-acid chain; its full sequence is Maturase K (506 aa).

The protein belongs to the intron maturase 2 family. MatK subfamily.

The protein resides in the plastid. It localises to the chloroplast. In terms of biological role, usually encoded in the trnK tRNA gene intron. Probably assists in splicing its own and other chloroplast group II introns. This Styphnolobium japonicum (Japanese pagoda tree) protein is Maturase K.